The following is a 279-amino-acid chain: Tryptophan synthase alpha chain (279 aa).

Active-site proton acceptor residues include E50 and D61.

The protein belongs to the TrpA family. In terms of assembly, tetramer of two alpha and two beta chains.

The catalysed reaction is (1S,2R)-1-C-(indol-3-yl)glycerol 3-phosphate + L-serine = D-glyceraldehyde 3-phosphate + L-tryptophan + H2O. It participates in amino-acid biosynthesis; L-tryptophan biosynthesis; L-tryptophan from chorismate: step 5/5. In terms of biological role, the alpha subunit is responsible for the aldol cleavage of indoleglycerol phosphate to indole and glyceraldehyde 3-phosphate. The polypeptide is Tryptophan synthase alpha chain (Rhizobium johnstonii (strain DSM 114642 / LMG 32736 / 3841) (Rhizobium leguminosarum bv. viciae)).